Here is a 62-residue protein sequence, read N- to C-terminus: Ponericin-W-like 32.2 (62 aa).

The signal sequence occupies residues M1–A23. Positions R49–P62 are excised as a propeptide.

It belongs to the non-disulfide-bridged peptide (NDBP) superfamily. Medium-length antimicrobial peptide (group 3) family. Ponericin-W subfamily. In terms of tissue distribution, expressed by the venom gland.

It is found in the secreted. Its subcellular location is the target cell membrane. In terms of biological role, antimicrobial peptide with potent activity against a range of Gram-positive and Gram-negative bacteria. Has high hemolytic activity against erythrocytes. May act by disrupting the integrity of the bacterial cell membrane. The polypeptide is Ponericin-W-like 32.2 (Lychas mucronatus (Chinese swimming scorpion)).